The primary structure comprises 334 residues: Phosphate acyltransferase (334 aa).

This sequence belongs to the PlsX family. As to quaternary structure, homodimer. Probably interacts with PlsY.

Its subcellular location is the cytoplasm. The catalysed reaction is a fatty acyl-[ACP] + phosphate = an acyl phosphate + holo-[ACP]. Its pathway is lipid metabolism; phospholipid metabolism. Catalyzes the reversible formation of acyl-phosphate (acyl-PO(4)) from acyl-[acyl-carrier-protein] (acyl-ACP). This enzyme utilizes acyl-ACP as fatty acyl donor, but not acyl-CoA. The protein is Phosphate acyltransferase of Desulfitobacterium hafniense (strain DSM 10664 / DCB-2).